Here is a 296-residue protein sequence, read N- to C-terminus: Mycothiol acetyltransferase (296 aa).

N-acetyltransferase domains are found at residues 1–148 (MTEW…IRVD) and 151–296 (VTVR…YGRA). Glu34 contributes to the 1D-myo-inositol 2-(L-cysteinylamino)-2-deoxy-alpha-D-glucopyranoside binding site. Residues 79-81 (LVV) and 87-92 (RRGIGS) each bind acetyl-CoA. Glu178, Lys219, and Glu229 together coordinate 1D-myo-inositol 2-(L-cysteinylamino)-2-deoxy-alpha-D-glucopyranoside. Acetyl-CoA is bound by residues 233 to 235 (VGV) and 240 to 246 (QGRGLGH). Tyr267 contributes to the 1D-myo-inositol 2-(L-cysteinylamino)-2-deoxy-alpha-D-glucopyranoside binding site. 272 to 277 (NQAALR) serves as a coordination point for acetyl-CoA.

The protein belongs to the acetyltransferase family. MshD subfamily. In terms of assembly, monomer.

The enzyme catalyses 1D-myo-inositol 2-(L-cysteinylamino)-2-deoxy-alpha-D-glucopyranoside + acetyl-CoA = mycothiol + CoA + H(+). In terms of biological role, catalyzes the transfer of acetyl from acetyl-CoA to desacetylmycothiol (Cys-GlcN-Ins) to form mycothiol. This Mycobacteroides abscessus (strain ATCC 19977 / DSM 44196 / CCUG 20993 / CIP 104536 / JCM 13569 / NCTC 13031 / TMC 1543 / L948) (Mycobacterium abscessus) protein is Mycothiol acetyltransferase.